The sequence spans 255 residues: MNDYIVVKCGGSMLDQLNDVFFDCIKKLQQQYKVVIVHGGGPEIDAKLKDCNINVEKRDGLRVTPKEVMDVVQMVLCGSTNKKLVMNLQKHNLLAVGCSGCDGNLLQVQPVSGEIGYVGEVSYVETALLKGLINMNYIPVIAPVGINDNEIYNINADTAAAGIAAALSAKELIFITDVDGVLHEGKLVKKTDESEIATFIEKGVITGGMIPKVQAALASLKMGVQKISIVNGTKDFTEVTGECIGTTVTKGVSIV.

Substrate-binding positions include 40 to 41 (GG), arginine 62, and asparagine 153.

This sequence belongs to the acetylglutamate kinase family. ArgB subfamily.

It is found in the cytoplasm. It carries out the reaction N-acetyl-L-glutamate + ATP = N-acetyl-L-glutamyl 5-phosphate + ADP. Its pathway is amino-acid biosynthesis; L-arginine biosynthesis; N(2)-acetyl-L-ornithine from L-glutamate: step 2/4. Functionally, catalyzes the ATP-dependent phosphorylation of N-acetyl-L-glutamate. The protein is Acetylglutamate kinase of Bacillus thuringiensis (strain Al Hakam).